The primary structure comprises 510 residues: Cytochrome P450 90D2 (510 aa).

Residues 6 to 26 form a helical membrane-spanning segment; the sequence is MVGSGGVYSWPAALLVAAIVV. Cysteine 444 is a heme binding site.

This sequence belongs to the cytochrome P450 family. It depends on heme as a cofactor.

It localises to the membrane. It catalyses the reaction 3-epi-6-deoxocathasterone + reduced [NADPH--hemoprotein reductase] + O2 = 6-deoxotyphasterol + oxidized [NADPH--hemoprotein reductase] + H2O + H(+). It carries out the reaction (22S,24R)-22-hydroxy-5alpha-ergostan-3-one + reduced [NADPH--hemoprotein reductase] + O2 = 3-dehydro-6-deoxoteasterone + oxidized [NADPH--hemoprotein reductase] + H2O + H(+). The catalysed reaction is 6-deoxycathasterone + reduced [NADPH--hemoprotein reductase] + O2 = 6-deoxoteasterone + oxidized [NADPH--hemoprotein reductase] + H2O + H(+). It functions in the pathway plant hormone biosynthesis; brassinosteroid biosynthesis. Its function is as follows. Involved in reduction steps of the biosynthesis of plant campesterol-derivative steroids, ending to castasterone (CS) but missing brassinolide (BL). Catalyzes the conversion of (22S,24R)-22-hydroxy-5alpha-ergostan-3-one (22-hydroxy-campesta-3-one, 22-OH-3-one) to 3-dehydro-6-deoxoteasterone (6-deoxo3DT, 6-deoxo-3-DHT), 3-epi-6-deoxocathasterone (3-epi-6-deoxoCT) to 6-deoxotyphasterol (6-deoxoTY) and of 6-deoxocathasterone (6-deoxoCT) to 6-deoxoteasterone (6-deoxoTE). This Brachypodium distachyon (Purple false brome) protein is Cytochrome P450 90D2.